A 668-amino-acid chain; its full sequence is Fructose-1,6-bisphosphatase class 3 (668 aa).

Belongs to the FBPase class 3 family. Mn(2+) is required as a cofactor.

It catalyses the reaction beta-D-fructose 1,6-bisphosphate + H2O = beta-D-fructose 6-phosphate + phosphate. The protein operates within carbohydrate biosynthesis; gluconeogenesis. This is Fructose-1,6-bisphosphatase class 3 from Clostridium botulinum (strain Okra / Type B1).